Consider the following 322-residue polypeptide: Fructose-1,6-bisphosphatase class 1 (322 aa).

4 residues coordinate Mg(2+): Glu-84, Asp-103, Leu-105, and Asp-106. Residues 106 to 109 (DGSS), Asn-198, and Lys-264 each bind substrate. Glu-270 is a binding site for Mg(2+).

It belongs to the FBPase class 1 family. Homotetramer. The cofactor is Mg(2+).

Its subcellular location is the cytoplasm. It catalyses the reaction beta-D-fructose 1,6-bisphosphate + H2O = beta-D-fructose 6-phosphate + phosphate. Its pathway is carbohydrate biosynthesis; gluconeogenesis. The protein is Fructose-1,6-bisphosphatase class 1 of Saccharophagus degradans (strain 2-40 / ATCC 43961 / DSM 17024).